The chain runs to 255 residues: Acetyl-coenzyme A carboxylase carboxyl transferase subunit alpha (255 aa).

One can recognise a CoA carboxyltransferase C-terminal domain in the interval 1–235 (MNIAKIVREA…KKELQTELAR (235 aa)).

The protein belongs to the AccA family. In terms of assembly, acetyl-CoA carboxylase is a heterohexamer composed of biotin carboxyl carrier protein (AccB), biotin carboxylase (AccC) and two subunits each of ACCase subunit alpha (AccA) and ACCase subunit beta (AccD).

The protein resides in the cytoplasm. It carries out the reaction N(6)-carboxybiotinyl-L-lysyl-[protein] + acetyl-CoA = N(6)-biotinyl-L-lysyl-[protein] + malonyl-CoA. Its pathway is lipid metabolism; malonyl-CoA biosynthesis; malonyl-CoA from acetyl-CoA: step 1/1. Its function is as follows. Component of the acetyl coenzyme A carboxylase (ACC) complex. First, biotin carboxylase catalyzes the carboxylation of biotin on its carrier protein (BCCP) and then the CO(2) group is transferred by the carboxyltransferase to acetyl-CoA to form malonyl-CoA. The sequence is that of Acetyl-coenzyme A carboxylase carboxyl transferase subunit alpha from Streptococcus pneumoniae serotype 19F (strain G54).